The primary structure comprises 431 residues: Glutamyl-tRNA(Gln) amidotransferase subunit A (431 aa).

Active-site charge relay system residues include Lys-37 and Ser-112. Ser-136 acts as the Acyl-ester intermediate in catalysis.

The protein belongs to the amidase family. GatA subfamily. In terms of assembly, heterotrimer of A, B and C subunits.

The catalysed reaction is L-glutamyl-tRNA(Gln) + L-glutamine + ATP + H2O = L-glutaminyl-tRNA(Gln) + L-glutamate + ADP + phosphate + H(+). In terms of biological role, allows the formation of correctly charged Gln-tRNA(Gln) through the transamidation of misacylated Glu-tRNA(Gln) in organisms which lack glutaminyl-tRNA synthetase. The reaction takes place in the presence of glutamine and ATP through an activated gamma-phospho-Glu-tRNA(Gln). The chain is Glutamyl-tRNA(Gln) amidotransferase subunit A from Methanospirillum hungatei JF-1 (strain ATCC 27890 / DSM 864 / NBRC 100397 / JF-1).